A 230-amino-acid polypeptide reads, in one-letter code: Large ribosomal subunit protein uL1 (230 aa).

This sequence belongs to the universal ribosomal protein uL1 family. As to quaternary structure, part of the 50S ribosomal subunit.

Binds directly to 23S rRNA. The L1 stalk is quite mobile in the ribosome, and is involved in E site tRNA release. Functionally, protein L1 is also a translational repressor protein, it controls the translation of the L11 operon by binding to its mRNA. The protein is Large ribosomal subunit protein uL1 of Onion yellows phytoplasma (strain OY-M).